The sequence spans 177 residues: Peptide methionine sulfoxide reductase MsrA (177 aa).

The active site involves C15.

Belongs to the MsrA Met sulfoxide reductase family.

It carries out the reaction L-methionyl-[protein] + [thioredoxin]-disulfide + H2O = L-methionyl-(S)-S-oxide-[protein] + [thioredoxin]-dithiol. The catalysed reaction is [thioredoxin]-disulfide + L-methionine + H2O = L-methionine (S)-S-oxide + [thioredoxin]-dithiol. Has an important function as a repair enzyme for proteins that have been inactivated by oxidation. Catalyzes the reversible oxidation-reduction of methionine sulfoxide in proteins to methionine. This chain is Peptide methionine sulfoxide reductase MsrA, found in Mycobacterium leprae (strain Br4923).